A 688-amino-acid polypeptide reads, in one-letter code: MSERKIPKEVIEEVERLREEIEYHNYRYYVLNDPVITDEEYDRLMRRLIELERMYPELVTPDSPTQRVGGKVLEGFKTVKHSVPMLSLDNTYNEEEILEFDRRVKKALQEAEVEYVAELKIDGVSIALRYENGRFVLGATRGDGIEGEDVSENVKTVRSIPLRLRKPVTIEVRGEIYMPVDEFKRLNDEREEEGLPPFANPRNAAAGTLRQLNTALVAARRLDSFIYYVVHPENYGLKTQWEALQFLKELGFKVNPHSRLCKNIQEVIDYWKEWKERKRELDYWVDGVVVKVNRFDFQRILGETSKAPRWAIAFKFPAEQARTRVLDVTIQVGRTGVLTPVAELEPVQLAGTIVKRASLHNFEYIREKDIRIGDYVFVEKAGGIIPQIVKSIPELRTGNEKEIKPPDKCPVCGGKVGKLNPDEVAIRCLNPHCPAKLKRALRTLVSREALDIEGLGEKLIDRLVDAGLIKDIADIFYLTPFDLAQLGPGIGQRTIAKILQEIEEAKKRPLHKLITGLGIPMVGQKTAKILAEHFKSLEAIADASYETLKDIPGIGPEIAKSIVEYFRNPKTREIIEKLKKAGVKLEEKVVKLDILRGLTFAVTGTLKNFTREEIIEFLEKLGAKVVNSVSRNTDYLIVGENPGSKYERAKMLKVKMMSEEEFLEFVRKRAELKGYNFDEIMRSWKEWS.

NAD(+) is bound by residues 38 to 42, 87 to 88, and Glu-118; these read DEEYD and SL. Lys-120 functions as the N6-AMP-lysine intermediate in the catalytic mechanism. Positions 141, 175, 291, and 315 each coordinate NAD(+). Zn(2+) is bound by residues Cys-409, Cys-412, Cys-428, and Cys-433. Positions 590-679 constitute a BRCT domain; sequence VKLDILRGLT…AELKGYNFDE (90 aa).

Belongs to the NAD-dependent DNA ligase family. LigA subfamily. Mg(2+) serves as cofactor. The cofactor is Mn(2+).

The enzyme catalyses NAD(+) + (deoxyribonucleotide)n-3'-hydroxyl + 5'-phospho-(deoxyribonucleotide)m = (deoxyribonucleotide)n+m + AMP + beta-nicotinamide D-nucleotide.. In terms of biological role, DNA ligase that catalyzes the formation of phosphodiester linkages between 5'-phosphoryl and 3'-hydroxyl groups in double-stranded DNA using NAD as a coenzyme and as the energy source for the reaction. It is essential for DNA replication and repair of damaged DNA. The sequence is that of DNA ligase from Thermotoga maritima (strain ATCC 43589 / DSM 3109 / JCM 10099 / NBRC 100826 / MSB8).